The following is a 359-amino-acid chain: Stearoyl-CoA desaturase (359 aa).

Residues 1-72 are Cytoplasmic-facing; that stretch reads MPAHLLQDDI…EGPSPKVEYV (72 aa). The helical transmembrane segment at 73 to 93 threads the bilayer; the sequence is WRNIILMSLLHLGALYGITLI. Position 75 (Asn-75) interacts with substrate. Residues 94–97 lie on the Lumenal side of the membrane; the sequence is PTCK. The chain crosses the membrane as a helical span at residues 98-118; sequence FYTWLWGVFYYFVSALGITAG. Residues 119–217 are Cytoplasmic-facing; sequence AHRLWSHRSY…EKLVMFQRRY (99 aa). His-120 and His-125 together coordinate Fe cation. Positions 120-125 match the Histidine box-1 motif; it reads HRLWSH. Residues Asn-148, Arg-155, and Asp-156 each coordinate substrate. Fe cation is bound by residues His-157, His-160, and His-161. The short motif at 157 to 161 is the Histidine box-2 element; it reads HRAHH. Residues Arg-188 and Lys-189 each coordinate substrate. 2 positions are modified to phosphoserine: Ser-198 and Ser-203. A helical membrane pass occupies residues 218–237; that stretch reads YKPGLLMMCFILPTLVPWYF. Residues 238–241 are Lumenal-facing; the sequence is WGET. A helical transmembrane segment spans residues 242 to 263; it reads FQNSVFVATFLRYAVVLNATWL. Substrate is bound at residue Trp-262. The Cytoplasmic segment spans residues 264 to 359; the sequence is VNSAAHLFGY…RTGDGNYKSG (96 aa). Residues His-269, His-298, His-301, and His-302 each contribute to the Fe cation site. The Histidine box-3 motif lies at 298 to 302; the sequence is HNYHH.

This sequence belongs to the fatty acid desaturase type 1 family. As to quaternary structure, may self-associate and form homodimers. Fe(2+) serves as cofactor. In terms of tissue distribution, detected in fetal liver, lung and brain. Highly expressed in adult adipose tissue, and at lower levels in adult brain and lung.

The protein resides in the endoplasmic reticulum membrane. It carries out the reaction octadecanoyl-CoA + 2 Fe(II)-[cytochrome b5] + O2 + 2 H(+) = (9Z)-octadecenoyl-CoA + 2 Fe(III)-[cytochrome b5] + 2 H2O. The catalysed reaction is hexadecanoyl-CoA + 2 Fe(II)-[cytochrome b5] + O2 + 2 H(+) = (9Z)-hexadecenoyl-CoA + 2 Fe(III)-[cytochrome b5] + 2 H2O. Stearoyl-CoA desaturase that utilizes O(2) and electrons from reduced cytochrome b5 to introduce the first double bond into saturated fatty acyl-CoA substrates. Catalyzes the insertion of a cis double bond at the delta-9 position into fatty acyl-CoA substrates including palmitoyl-CoA and stearoyl-CoA. Gives rise to a mixture of 16:1 and 18:1 unsaturated fatty acids. Plays an important role in lipid biosynthesis. Plays an important role in regulating the expression of genes that are involved in lipogenesis and in regulating mitochondrial fatty acid oxidation. Plays an important role in body energy homeostasis. Contributes to the biosynthesis of membrane phospholipids, cholesterol esters and triglycerides. The protein is Stearoyl-CoA desaturase (SCD) of Homo sapiens (Human).